The chain runs to 211 residues: Troponin I, cardiac muscle (211 aa).

Residues 1–23 (MADESGDAAGCPPPAPAPIRRQS) form a disordered region. Alanine 2 carries the post-translational modification N-acetylalanine. Serine 5 is modified (phosphoserine). 2 positions are modified to phosphoserine; by PKA and PKD/PRKD1: serine 23 and serine 24. Tyrosine 27 bears the Phosphotyrosine mark. Phosphothreonine; by STK4/MST1 is present on threonine 32. Positions 33 to 80 (EPHAKKKSKISASRKLQLKTLMLQIAKQELEREAEERRGEKGRALSTR) are involved in binding TNC. Residues serine 43 and serine 45 each carry the phosphoserine; by PKC/PRKCE modification. Threonine 52 carries the post-translational modification Phosphothreonine; by STK4/MST1. Phosphoserine is present on serine 78. The residue at position 79 (threonine 79) is a Phosphothreonine. Residues threonine 130 and threonine 144 each carry the phosphothreonine; by STK4/MST1 modification. An involved in binding TNC and actin region spans residues 130–150 (TQKIFDLRGKFKRPTLRRVRI). Serine 151 is subject to Phosphoserine; by PAK3. Serine 167 carries the phosphoserine modification. Threonine 182 bears the Phosphothreonine mark. At serine 200 the chain carries Phosphoserine.

The protein belongs to the troponin I family. As to quaternary structure, binds to actin and tropomyosin. Interacts with TRIM63. Interacts with STK4/MST1. Phosphorylated at Ser-23 and Ser-24 by PRKD1; phosphorylation reduces myofilament calcium sensitivity. Phosphorylated preferentially at Thr-32. Phosphorylation by STK4/MST1 alters its binding affinity to TNNC1 (cardiac Tn-C) and TNNT2 (cardiac Tn-T). Phosphorylated at Ser-43 and Ser-45 by PRKCE; phosphorylation increases myocardium contractile dysfunction.

In terms of biological role, troponin I is the inhibitory subunit of troponin, the thin filament regulatory complex which confers calcium-sensitivity to striated muscle actomyosin ATPase activity. This Canis lupus familiaris (Dog) protein is Troponin I, cardiac muscle (TNNI3).